The sequence spans 230 residues: UPF0758 protein Glov_0523 (230 aa).

The region spanning 108 to 230 (RFTSPAQVFD…YFSFVESGLL (123 aa)) is the MPN domain. Residues His179, His181, and Asp192 each contribute to the Zn(2+) site. The short motif at 179–192 (HNHPSGDPAPSRED) is the JAMM motif element.

Belongs to the UPF0758 family.

This Trichlorobacter lovleyi (strain ATCC BAA-1151 / DSM 17278 / SZ) (Geobacter lovleyi) protein is UPF0758 protein Glov_0523.